Consider the following 529-residue polypeptide: Mitochondrial inner membrane magnesium transporter MIT1 (529 aa).

Coiled coils occupy residues 336 to 388 (KIQL…LKNE) and 416 to 450 (LLETHLQLTDELSGELENMEEKITHYEELMRLNLD). A helical transmembrane segment spans residues 456-476 (FILLNAKISFSTLFCSICAVI). Residues 477-492 (TSLFGMNLKNFIEHND) are Mitochondrial intermembrane-facing. A helical membrane pass occupies residues 493 to 513 (YAFFIVSIFITSWSIVGIYFT). At 514–529 (KNINTLLRFFDKYNVK) the chain is on the mitochondrial matrix side.

The protein belongs to the CorA metal ion transporter (MIT) (TC 1.A.35) family.

The protein localises to the mitochondrion inner membrane. Its function is as follows. Mitochondrial inner membrane magnesium transporter required for mitochondrial magnesium homeostasis. Involved in the development of the sporozoite in the mosquito vector midgut. The polypeptide is Mitochondrial inner membrane magnesium transporter MIT1 (Plasmodium falciparum (isolate 3D7)).